The primary structure comprises 264 residues: Thymidylate synthase (264 aa).

Arg21 provides a ligand contact to dUMP. (6R)-5,10-methylene-5,6,7,8-tetrahydrofolate is bound at residue His51. DUMP is bound at residue 126–127 (RR). Cys146 acts as the Nucleophile in catalysis. DUMP is bound by residues 166–169 (RSAD), Asn177, and 207–209 (HLY). Position 169 (Asp169) interacts with (6R)-5,10-methylene-5,6,7,8-tetrahydrofolate. Ala263 contacts (6R)-5,10-methylene-5,6,7,8-tetrahydrofolate.

Belongs to the thymidylate synthase family. Bacterial-type ThyA subfamily. In terms of assembly, homodimer.

It localises to the cytoplasm. The enzyme catalyses dUMP + (6R)-5,10-methylene-5,6,7,8-tetrahydrofolate = 7,8-dihydrofolate + dTMP. It functions in the pathway pyrimidine metabolism; dTTP biosynthesis. Catalyzes the reductive methylation of 2'-deoxyuridine-5'-monophosphate (dUMP) to 2'-deoxythymidine-5'-monophosphate (dTMP) while utilizing 5,10-methylenetetrahydrofolate (mTHF) as the methyl donor and reductant in the reaction, yielding dihydrofolate (DHF) as a by-product. This enzymatic reaction provides an intracellular de novo source of dTMP, an essential precursor for DNA biosynthesis. The polypeptide is Thymidylate synthase (Azotobacter vinelandii (strain DJ / ATCC BAA-1303)).